We begin with the raw amino-acid sequence, 327 residues long: Immediate early response gene 5 protein (327 aa).

Disordered regions lie at residues glycine 59–proline 166 and glycine 227–valine 313. Over residues glutamine 71–glycine 84 the composition is skewed to low complexity. Over residues glycine 253–glutamate 262 the composition is skewed to acidic residues. Over residues asparagine 265–serine 278 the composition is skewed to polar residues.

It belongs to the IER family. As to quaternary structure, monomer. Homodimer. Associates with the catalytic subunit of protein phosphatase PP2A. Interacts (via N- and C-terminal regions) with PPP2R2B. Interacts with PPP2R2A, PPP2R2C and PPP2R2D. Interacts (via N-terminus) with RPS6KB1. Interacts (via central region) with HSF1; this interaction promotes PPP2CA-induced HSF1 dephosphorylation, leading to enhanced HSF1 transcriptional activity. Expressed in acute myeloid leukemia (AML) cells.

It localises to the nucleus. It is found in the cytoplasm. Its function is as follows. Plays a role as a transcription factor. Mediates positive transcriptional regulation of several chaperone genes during the heat shock response in a HSF1-dependent manner. Mediates negative transcriptional regulation of CDC25B expression. Plays a role in the dephosphorylation of the heat shock factor HSF1 and ribosomal protein S6 kinase (S6K) by the protein phosphatase PP2A. Involved in the regulation of cell proliferation and resistance to thermal stress. Involved in the cell cycle checkpoint and survival in response to ionizing radiation. Associates with chromatin to the CDC25B promoter. The chain is Immediate early response gene 5 protein (IER5) from Homo sapiens (Human).